The chain runs to 401 residues: MTMGNFLKRFGSGKSRSSRNMTLGTTSSQSHEPSPSDPSLSLADNTNATKKKYALIPDRFSSLDQVSKALREAGLESSNLILGVDFTKSNEWTGKTSFDGKCLHALGETSNPYEKAIFVIGQTLAPFDEDNLIPCFGFGDSTTHDEEVFGFHSDNSPCHGFEEVLACYKRIAPNLRLSGPTSYGPLIDAAVDIVEKNNGQFHVLVIVADGQVTRGTDMAEGELSQQEKTTIDAIVNASSYALSIVLVGVGDGPWEDMRKFDDKIPKREFDNFQFVNFTEIMTRNSPESAKETAFALAALMEIPFQYQAAIELRLLGKQTGLAKTIVPRPPPIPYTPPTNAELPSTASPASPEQTQSCPICLTNRKDVAFSCGHMTCGDCGSKISNCPICRVRITNRLKLYT.

The tract at residues 1–43 (MTMGNFLKRFGSGKSRSSRNMTLGTTSSQSHEPSPSDPSLSLA) is disordered. Residues 8–19 (KRFGSGKSRSSR) are compositionally biased toward low complexity. Over residues 20-32 (NMTLGTTSSQSHE) the composition is skewed to polar residues. A VWFA domain is found at 79–299 (NLILGVDFTK…KETAFALAAL (221 aa)). Residues 326 to 350 (VPRPPPIPYTPPTNAELPSTASPAS) form a disordered region. Pro residues predominate over residues 327–336 (PRPPPIPYTP). Residues 341–350 (ELPSTASPAS) show a composition bias toward polar residues. The RING-type zinc finger occupies 357–390 (CPICLTNRKDVAFSCGHMTCGDCGSKISNCPICR).

As to quaternary structure, interacts with UBC30, GRXS17 and GLB3. Widely expressed.

It is found in the cytoplasm. The protein resides in the nucleus. The enzyme catalyses S-ubiquitinyl-[E2 ubiquitin-conjugating enzyme]-L-cysteine + [acceptor protein]-L-lysine = [E2 ubiquitin-conjugating enzyme]-L-cysteine + N(6)-ubiquitinyl-[acceptor protein]-L-lysine.. Functionally, possesses E3 ubiquitin-protein ligase in vitro. Acts as upstream modulator of jasmonate (JA) signaling in response to various stimuli, such as JA-inhibited root growth, JA-inductive gene expression, coronatine-mediated pathogen susceptibility, wound-stimulated expression of JA-responsive genes and wound-induced JA biosynthesis. Controls fumonisin B1 (FB1)-triggered programmed cell death (PCD) by modulating the JA signaling pathway. May mediate salicylic acid (SA) suppression of JA signaling in FB1-induced responses. May mediate the formation of 'Lys-48'-linked multiubiquitin chains. Mediates the polyubiquitination and subsequent proteasomal degradation of the target protein GRXS17. The chain is E3 ubiquitin-protein ligase RGLG4 from Arabidopsis thaliana (Mouse-ear cress).